A 396-amino-acid chain; its full sequence is Carbamoyl phosphate synthase small chain (396 aa).

Residues 1–204 form a CPSase region; sequence MTQHDNDPAW…WDKGFGQQDK (204 aa). Residues S59, G256, and G258 each coordinate L-glutamine. Residues 208 to 396 form the Glutamine amidotransferase type-1 domain; sequence NVVAIDYGIK…AELMRQKKSA (189 aa). The Nucleophile role is filled by C285. L286, Q289, N327, G329, and F330 together coordinate L-glutamine. Residues H369 and E371 contribute to the active site.

This sequence belongs to the CarA family. Composed of two chains; the small (or glutamine) chain promotes the hydrolysis of glutamine to ammonia, which is used by the large (or ammonia) chain to synthesize carbamoyl phosphate. Tetramer of heterodimers (alpha,beta)4.

It catalyses the reaction hydrogencarbonate + L-glutamine + 2 ATP + H2O = carbamoyl phosphate + L-glutamate + 2 ADP + phosphate + 2 H(+). The catalysed reaction is L-glutamine + H2O = L-glutamate + NH4(+). Its pathway is amino-acid biosynthesis; L-arginine biosynthesis; carbamoyl phosphate from bicarbonate: step 1/1. The protein operates within pyrimidine metabolism; UMP biosynthesis via de novo pathway; (S)-dihydroorotate from bicarbonate: step 1/3. In terms of biological role, small subunit of the glutamine-dependent carbamoyl phosphate synthetase (CPSase). CPSase catalyzes the formation of carbamoyl phosphate from the ammonia moiety of glutamine, carbonate, and phosphate donated by ATP, constituting the first step of 2 biosynthetic pathways, one leading to arginine and/or urea and the other to pyrimidine nucleotides. The small subunit (glutamine amidotransferase) binds and cleaves glutamine to supply the large subunit with the substrate ammonia. This Bradyrhizobium diazoefficiens (strain JCM 10833 / BCRC 13528 / IAM 13628 / NBRC 14792 / USDA 110) protein is Carbamoyl phosphate synthase small chain.